Reading from the N-terminus, the 343-residue chain is Glucokinase (343 aa).

Position 18 to 23 (G18 to T23) interacts with ATP.

The protein belongs to the bacterial glucokinase family.

It is found in the cytoplasm. The catalysed reaction is D-glucose + ATP = D-glucose 6-phosphate + ADP + H(+). This Brucella melitensis biotype 1 (strain ATCC 23456 / CCUG 17765 / NCTC 10094 / 16M) protein is Glucokinase.